The primary structure comprises 315 residues: Ribosomal RNA small subunit methyltransferase H (315 aa).

S-adenosyl-L-methionine contacts are provided by residues 35–37 (AGH), Asp55, Phe84, Asp105, and Gln112.

This sequence belongs to the methyltransferase superfamily. RsmH family.

It is found in the cytoplasm. The catalysed reaction is cytidine(1402) in 16S rRNA + S-adenosyl-L-methionine = N(4)-methylcytidine(1402) in 16S rRNA + S-adenosyl-L-homocysteine + H(+). Its function is as follows. Specifically methylates the N4 position of cytidine in position 1402 (C1402) of 16S rRNA. This is Ribosomal RNA small subunit methyltransferase H from Streptococcus agalactiae serotype III (strain NEM316).